A 341-amino-acid chain; its full sequence is MGGKKIKIGINGFGRIGRLVARVALQRDDVELVAVNDPFITTDYMTYMFKYDSVHGQWKHHELKVKDSKTLLFGEKPVTVFGVRNPEEIPWGETGAEFVVESTGVFTDKDKAAAHLKGGAKKVIISAPSKDAPMFVVGVNEHEYKSNIDIVSNASCTTNCLAPLAKVINDKFGIVEGLMTTVHSITATQKTVDGPSSKDWRGGRAAGFNIIPSSTGAAKAVGKVLPALNGKLTGMAFRVPTVDVSVVDLTVRLEKAASYEEIKAVIKAESEGKLKGILGYTEEDVVSTDFIGDNRSSIFDAKAGIALNEHFVKLVSWYDNEWGYSSRVIDLILIVHMASCQ.

NAD(+) contacts are provided by residues 15–16, Asp-37, and Arg-84; that span reads RI. Residues 155–157, Thr-186, 215–216, and Arg-238 each bind D-glyceraldehyde 3-phosphate; these read SCT and TG. Cys-156 acts as the Nucleophile in catalysis. Asn-320 contributes to the NAD(+) binding site.

It belongs to the glyceraldehyde-3-phosphate dehydrogenase family. In terms of assembly, homotetramer.

It is found in the cytoplasm. It carries out the reaction D-glyceraldehyde 3-phosphate + phosphate + NAD(+) = (2R)-3-phospho-glyceroyl phosphate + NADH + H(+). It participates in carbohydrate degradation; glycolysis; pyruvate from D-glyceraldehyde 3-phosphate: step 1/5. Functionally, key enzyme in glycolysis that catalyzes the first step of the pathway by converting D-glyceraldehyde 3-phosphate (G3P) into 3-phospho-D-glyceroyl phosphate. Essential for the maintenance of cellular ATP levels and carbohydrate metabolism. The chain is Glyceraldehyde-3-phosphate dehydrogenase, cytosolic (GAPC) from Magnolia liliiflora (Mulan magnolia).